The chain runs to 432 residues: Tubulin-specific chaperone cofactor E-like protein (432 aa).

LRR repeat units follow at residues 69 to 94 (ASHV…ILKN), 95 to 117 (LPHL…HELP), 118 to 140 (VSTL…QSFL), 143 to 167 (LPKV…EPIS), 168 to 191 (TTVR…NVVK), 193 to 217 (FPNV…HFEQ), and 218 to 242 (LPFW…QLNR). The LRRCT stretch occupies residues 254 to 295 (IPLLDALTNEERLHLIIGRLHHLRVLNGSKISSEQREQSERF). A ubiquitin-like (UBL) region spans residues 324-415 (VTIDLTPKKE…GDSFLVQEKI (92 aa)).

The protein resides in the cytoplasm. The protein localises to the cytoskeleton. Functionally, acts as a regulator of tubulin stability. Involved in microtubule-dependent neuronal function. May be involved in tubulin acetylation/deacetylation pathway. This is Tubulin-specific chaperone cofactor E-like protein from Caenorhabditis elegans.